Reading from the N-terminus, the 107-residue chain is MSHQKIIQDLIAWIDEHIDQPLNIDVVAKKSGYSKWYLQRMFRTVTHQTLGDYIRQRRLLLAAVELRTTERPIFDIAMDLGYVSQQTFSRVFRRQFDRTPSDYRHRL.

An HTH araC/xylS-type domain is found at 8 to 106 (QDLIAWIDEH…DRTPSDYRHR (99 aa)). 2 consecutive DNA-binding regions (H-T-H motif) follow at residues 25–46 (DVVA…RTVT) and 73–96 (IFDI…RRQF).

The protein localises to the cytoplasm. Transcriptional activator of the superoxide response regulon of E.coli that includes at least 10 genes such as sodA, nfo, zwf and micF. Binds the DNA sequence 5'-GCACN(7)CAA-3'. It also facilitates the subsequent binding of RNA polymerase to the micF and the nfo promoters. This chain is Regulatory protein SoxS (soxS), found in Escherichia coli O157:H7.